The sequence spans 352 residues: MYTPIPQSGSPFPASVQDPGLHIWRVEKLKPVPIARESHGIFFSGDSYLVLHNGPEEASHLHLWIGQQSSRDEQGACAVLAVHLNTLLGERPVQHREVQGNESDLFMSYFPRGLKYYREGGVESAFHKTTSGARGAAIRKLYQVKGKKNIRATERPLSWDSFNTGDCFILDLGQNIFAWCGGKSNILERNKARDLALAIRDSERQGKAQVEIITDGEEPAEMIQVLGPKPALKEGNPEEDITADQTRPNAQAAALYKVSDATGQMNLTKVADSSPFASELLIPDDCFVLDNGLCAQIYIWKGRKANEKERQAALQVADGFISRMRYSPNTQVEILPQGRESPIFKQFFKNWK.

N-acetylmethionine is present on methionine 1. One copy of the Gelsolin-like 1 repeat lies at 27-75; it reads EKLKPVPIARESHGIFFSGDSYLVLHNGPEEASHLHLWIGQQSSRDEQG. A Nuclear localization signal motif is present at residues 139 to 148; the sequence is RKLYQVKGKK. Gelsolin-like repeat units lie at residues 150 to 190 and 265 to 311; these read IRAT…LERN and MNLT…KERQ. Serine 341 is subject to Phosphoserine.

This sequence belongs to the villin/gelsolin family. In terms of assembly, interacts with NUP62. Interacts with NUTF2 and RAN; involved in CAPG nuclear import. In terms of processing, phosphorylated. Nuclear GCAP39 is more highly phosphorylated than cytoplasmic GCAP39. Present in a large variety of tissues and is particularly abundant in kidney and lung. Highly expressed in macrophages (at protein level).

It is found in the nucleus. Its subcellular location is the cytoplasm. The protein resides in the melanosome. The protein localises to the cell projection. It localises to the lamellipodium. It is found in the ruffle. In terms of biological role, calcium-sensitive protein which reversibly blocks the barbed ends of actin filaments but does not sever preformed actin filaments. May play an important role in macrophage function. May play a role in regulating cytoplasmic and/or nuclear structures through potential interactions with actin. May bind DNA. Uncapping occurs either when Ca(2+) falls or when the concentration of polyphosphoinositide rises, both at low and high Ca(2+). In Mus musculus (Mouse), this protein is Macrophage-capping protein (Capg).